Consider the following 481-residue polypeptide: 6-phosphogluconate dehydrogenase, decarboxylating (481 aa).

Residues 11–16 (GLAVMG), 34–36 (NRT), 76–78 (VKA), and Asn104 contribute to the NADP(+) site. Substrate is bound by residues Asn104 and 130 to 132 (SGG). Residue Lys184 is the Proton acceptor of the active site. Substrate is bound at residue 187-188 (HN). Glu191 functions as the Proton donor in the catalytic mechanism. Substrate contacts are provided by Tyr192, Lys259, Arg286, Arg445, and His451.

The protein belongs to the 6-phosphogluconate dehydrogenase family. In terms of assembly, homodimer.

The enzyme catalyses 6-phospho-D-gluconate + NADP(+) = D-ribulose 5-phosphate + CO2 + NADPH. The protein operates within carbohydrate degradation; pentose phosphate pathway; D-ribulose 5-phosphate from D-glucose 6-phosphate (oxidative stage): step 3/3. Catalyzes the oxidative decarboxylation of 6-phosphogluconate to ribulose 5-phosphate and CO(2), with concomitant reduction of NADP to NADPH. This Ceratitis capitata (Mediterranean fruit fly) protein is 6-phosphogluconate dehydrogenase, decarboxylating (Pgd).